Consider the following 118-residue polypeptide: MLGAYLPIIVLVVVAVLFGCGSLIFSSLIGQKKPSVVKMAPYECGCEPVGSARERFSIKFYIIAMLFILFDIEAVFLYPWAVLFKRLGMFGLMEMGVFIVILFVGYIYVWKKGALEWE.

The next 3 membrane-spanning stretches (helical) occupy residues 5 to 25 (YLPIIVLVVVAVLFGCGSLIF), 62 to 82 (IIAMLFILFDIEAVFLYPWAV), and 87 to 107 (LGMFGLMEMGVFIVILFVGYI).

This sequence belongs to the complex I subunit 3 family. NDH-1 is composed of 14 different subunits. Subunits NuoA, H, J, K, L, M, N constitute the membrane sector of the complex.

It localises to the cell inner membrane. The catalysed reaction is a quinone + NADH + 5 H(+)(in) = a quinol + NAD(+) + 4 H(+)(out). Functionally, NDH-1 shuttles electrons from NADH, via FMN and iron-sulfur (Fe-S) centers, to quinones in the respiratory chain. The immediate electron acceptor for the enzyme in this species is believed to be ubiquinone. Couples the redox reaction to proton translocation (for every two electrons transferred, four hydrogen ions are translocated across the cytoplasmic membrane), and thus conserves the redox energy in a proton gradient. The sequence is that of NADH-quinone oxidoreductase subunit A 2 from Geotalea uraniireducens (strain Rf4) (Geobacter uraniireducens).